The sequence spans 97 residues: Intermembrane phospholipid transport system binding protein MlaB (97 aa).

An STAS domain is found at 1–97 (MSESLSWMQT…YNLPADVLPR (97 aa)).

As to quaternary structure, the complex is composed of two ATP-binding proteins (MlaF), two transmembrane proteins (MlaE), two cytoplasmic solute-binding proteins (MlaB) and six periplasmic solute-binding proteins (MlaD).

The protein resides in the cytoplasm. Part of the ABC transporter complex MlaFEDB, which is involved in a phospholipid transport pathway that maintains lipid asymmetry in the outer membrane by retrograde trafficking of phospholipids from the outer membrane to the inner membrane. MlaB plays critical roles in both the assembly and activity of the complex. May act by modulating MlaF structure and stability. In Escherichia coli (strain K12), this protein is Intermembrane phospholipid transport system binding protein MlaB.